Here is a 381-residue protein sequence, read N- to C-terminus: O-phospho-L-seryl-tRNA:Cys-tRNA synthase (381 aa).

Pyridoxal 5'-phosphate-binding positions include 86 to 87, asparagine 192, and 215 to 217; these read AR and SGH. Lysine 218 is subject to N6-(pyridoxal phosphate)lysine.

Belongs to the SepCysS family. Homodimer. Interacts with SepRS. It depends on pyridoxal 5'-phosphate as a cofactor.

It catalyses the reaction O-phospho-L-seryl-tRNA(Cys) + hydrogen sulfide + H(+) = L-cysteinyl-tRNA(Cys) + phosphate. In terms of biological role, converts O-phospho-L-seryl-tRNA(Cys) (Sep-tRNA(Cys)) to L-cysteinyl-tRNA(Cys) (Cys-tRNA(Cys)). The chain is O-phospho-L-seryl-tRNA:Cys-tRNA synthase from Methanococcus vannielii (strain ATCC 35089 / DSM 1224 / JCM 13029 / OCM 148 / SB).